Consider the following 138-residue polypeptide: Dual specificity phosphatase ibp1 (138 aa).

In terms of domain architecture, Rhodanese spans 19-133 (SPNEISIIDV…WKRRYGGQQG (115 aa)). The active-site Phosphocysteine intermediate is the C70.

The protein belongs to the MPI phosphatase family.

Its subcellular location is the cytoplasm. The protein localises to the nucleus. The enzyme catalyses O-phospho-L-tyrosyl-[protein] + H2O = L-tyrosyl-[protein] + phosphate. Functionally, may play a role in DNA replication checkpoint via regulation of hsk1 or may act downstream of hsk1 in an S phase regulatory pathway. This chain is Dual specificity phosphatase ibp1 (ibp1), found in Schizosaccharomyces pombe (strain 972 / ATCC 24843) (Fission yeast).